Consider the following 287-residue polypeptide: Phosphoribosylaminoimidazole-succinocarboxamide synthase (287 aa).

It belongs to the SAICAR synthetase family.

The catalysed reaction is 5-amino-1-(5-phospho-D-ribosyl)imidazole-4-carboxylate + L-aspartate + ATP = (2S)-2-[5-amino-1-(5-phospho-beta-D-ribosyl)imidazole-4-carboxamido]succinate + ADP + phosphate + 2 H(+). The protein operates within purine metabolism; IMP biosynthesis via de novo pathway; 5-amino-1-(5-phospho-D-ribosyl)imidazole-4-carboxamide from 5-amino-1-(5-phospho-D-ribosyl)imidazole-4-carboxylate: step 1/2. The chain is Phosphoribosylaminoimidazole-succinocarboxamide synthase from Neisseria meningitidis serogroup A / serotype 4A (strain DSM 15465 / Z2491).